A 116-amino-acid chain; its full sequence is NADPH-dependent 7-cyano-7-deazaguanine reductase (116 aa).

Cys31 functions as the Thioimide intermediate in the catalytic mechanism. The active-site Proton donor is Asp38. Substrate is bound by residues 53–55 (VEL) and 72–73 (YE).

It belongs to the GTP cyclohydrolase I family. QueF type 1 subfamily.

It localises to the cytoplasm. The enzyme catalyses 7-aminomethyl-7-carbaguanine + 2 NADP(+) = 7-cyano-7-deazaguanine + 2 NADPH + 3 H(+). It participates in tRNA modification; tRNA-queuosine biosynthesis. Its function is as follows. Catalyzes the NADPH-dependent reduction of 7-cyano-7-deazaguanine (preQ0) to 7-aminomethyl-7-deazaguanine (preQ1). This Chlorobium phaeovibrioides (strain DSM 265 / 1930) (Prosthecochloris vibrioformis (strain DSM 265)) protein is NADPH-dependent 7-cyano-7-deazaguanine reductase.